The sequence spans 117 residues: Immunoglobulin kappa variable 1D-43 (117 aa).

A signal peptide spans 1 to 22 (MDMRVPAQRLGLLLLWFPGARC). Positions 23-45 (AIRMTQSPFSLSASVGDRVTITC) are framework-1. Residues 23–117 (AIRMTQSPFS…YYCQQYYSTP (95 aa)) enclose the Ig-like domain. The cysteines at positions 45 and 110 are disulfide-linked. A complementarity-determining-1 region spans residues 46–56 (WASQGISSYLA). Positions 57–71 (WYQQKPAKAPKLFIY) are framework-2. The tract at residues 72–78 (YASSLQS) is complementarity-determining-2. A framework-3 region spans residues 79-110 (GVPSRFSGSGSGTDYTLTISSLQPEDFATYYC). The tract at residues 111 to 117 (QQYYSTP) is complementarity-determining-3.

In terms of assembly, immunoglobulins are composed of two identical heavy chains and two identical light chains; disulfide-linked.

The protein resides in the secreted. It is found in the cell membrane. V region of the variable domain of immunoglobulin light chains that participates in the antigen recognition. Immunoglobulins, also known as antibodies, are membrane-bound or secreted glycoproteins produced by B lymphocytes. In the recognition phase of humoral immunity, the membrane-bound immunoglobulins serve as receptors which, upon binding of a specific antigen, trigger the clonal expansion and differentiation of B lymphocytes into immunoglobulins-secreting plasma cells. Secreted immunoglobulins mediate the effector phase of humoral immunity, which results in the elimination of bound antigens. The antigen binding site is formed by the variable domain of one heavy chain, together with that of its associated light chain. Thus, each immunoglobulin has two antigen binding sites with remarkable affinity for a particular antigen. The variable domains are assembled by a process called V-(D)-J rearrangement and can then be subjected to somatic hypermutations which, after exposure to antigen and selection, allow affinity maturation for a particular antigen. This chain is Immunoglobulin kappa variable 1D-43, found in Homo sapiens (Human).